A 1300-amino-acid chain; its full sequence is DNA-directed RNA polymerase subunit beta (1300 aa).

This sequence belongs to the RNA polymerase beta chain family. In terms of assembly, the RNAP catalytic core consists of 2 alpha, 1 beta, 1 beta' and 1 omega subunit. When a sigma factor is associated with the core the holoenzyme is formed, which can initiate transcription.

The catalysed reaction is RNA(n) + a ribonucleoside 5'-triphosphate = RNA(n+1) + diphosphate. In terms of biological role, DNA-dependent RNA polymerase catalyzes the transcription of DNA into RNA using the four ribonucleoside triphosphates as substrates. The polypeptide is DNA-directed RNA polymerase subunit beta (Chlorobium chlorochromatii (strain CaD3)).